Here is a 375-residue protein sequence, read N- to C-terminus: Fructose-1,6-bisphosphate aldolase/phosphatase (375 aa).

The active-site Proton acceptor; for FBP phosphatase activity is the Asp-15. Mg(2+)-binding residues include Asp-15, His-22, Asp-56, and Asp-57. A beta-D-fructose 1,6-bisphosphate-binding site is contributed by His-22. His-22 is a binding site for dihydroxyacetone phosphate. A beta-D-fructose 1,6-bisphosphate-binding site is contributed by Tyr-94. Mg(2+) is bound at residue Gln-98. 107–108 serves as a coordination point for beta-D-fructose 1,6-bisphosphate; that stretch reads GN. Asp-135 serves as a coordination point for Mg(2+). A beta-D-fructose 1,6-bisphosphate-binding site is contributed by Lys-136. Residue Lys-136 coordinates dihydroxyacetone phosphate. The Proton donor/acceptor; for FBP aldolase activity role is filled by Tyr-237. Positions 240, 241, and 242 each coordinate Mg(2+). The Schiff-base intermediate with DHAP; for FBP aldolase activity role is filled by Lys-240. Beta-D-fructose 1,6-bisphosphate-binding positions include 250 to 251, Arg-274, Asp-295, and Tyr-357; that span reads QS. 2 residues coordinate dihydroxyacetone phosphate: Arg-274 and Asp-295.

The protein belongs to the FBP aldolase/phosphatase family. Homooctamer; dimer of tetramers. Requires Mg(2+) as cofactor.

The enzyme catalyses beta-D-fructose 1,6-bisphosphate = D-glyceraldehyde 3-phosphate + dihydroxyacetone phosphate. It catalyses the reaction beta-D-fructose 1,6-bisphosphate + H2O = beta-D-fructose 6-phosphate + phosphate. Its pathway is carbohydrate biosynthesis; gluconeogenesis. With respect to regulation, FBPase activity is inhibited by Ca(2+), ATP, ADP and phosphoenolpyruvate. Functionally, catalyzes two subsequent steps in gluconeogenesis: the aldol condensation of dihydroxyacetone phosphate (DHAP) and glyceraldehyde-3-phosphate (GA3P) to fructose-1,6-bisphosphate (FBP), and the dephosphorylation of FBP to fructose-6-phosphate (F6P). Can also dephosphorylate, with lower activity, other related substrates including fructose-1-phosphate, fructose-6-phosphate, glucose-1-phosphate, glucose-6-phosphate, glycerol-2-phosphate, phosphoenolpyruvate, 5'-AMP, 6'-ADP and 7'-ATP. This is Fructose-1,6-bisphosphate aldolase/phosphatase from Thermococcus onnurineus (strain NA1).